We begin with the raw amino-acid sequence, 1010 residues long: Eukaryotic translation initiation factor 4E transporter (1010 aa).

The YXXXXLphi motif signature appears at 10-16 (YSKVDLL). Disordered stretches follow at residues 154 to 182 (GSNSEESNEGINTCASKGKAASSPSRKGS), 196 to 277 (PDHD…RLVE), 289 to 320 (YDSKKSFDRQGINNRRISGKEPFSTQSRSKRG), 354 to 391 (NEERSVTEDKNNQIQQLDKNLDAQASKDEASMRNSNDS), and 921 to 960 (QSNPQMSPPVPGFSDSSDSGNVIKANSLTSPSYQRDERIS). Residues 201 to 211 (CMSSSPTFSTS) are compositionally biased toward polar residues. A compositionally biased stretch (basic and acidic residues) spans 227–247 (DNWDYKNEKTVEASIENEKET). The span at 248–263 (SPNGSGSTSSLNQHNQ) shows a compositional bias: polar residues. 2 stretches are compositionally biased toward basic and acidic residues: residues 354 to 364 (NEERSVTEDKN) and 372 to 384 (KNLDAQASKDEAS). A compositionally biased stretch (polar residues) spans 934–953 (SDSSDSGNVIKANSLTSPSY).

The protein belongs to the 4E-T/EIF4E-T family. As to quaternary structure, interacts (via YXXXXLphi motif) with eIF4E1. Interacts with DDX6/me31B. As to expression, expressed in all larval and adult organs and tissues, with highest levels in the ovary.

Its subcellular location is the cytoplasm. It localises to the P-body. It is found in the nucleus. Functionally, eIF4E1-binding protein that regulates translation and stability of mRNAs in processing bodies (P-bodies). Probably plays a role in P-bodies to coordinate the storage of translationally inactive mRNAs in the cytoplasm and prevent their degradation. Acts as a binding platform for multiple RNA-binding proteins. Required for the formation of P-bodies. This Drosophila melanogaster (Fruit fly) protein is Eukaryotic translation initiation factor 4E transporter.